A 191-amino-acid chain; its full sequence is NAD(P)H dehydrogenase (quinone) (191 aa).

Residues 4-184 (ILVIFHSITG…VAKMLGKRVA (181 aa)) enclose the Flavodoxin-like domain. Residues 10–15 (SITGNT), 83–85 (TRF), and 118–124 (SNEMPHG) each bind FMN.

It belongs to the WrbA family. Homodimer and homotetramer; in equilibrium. Requires FMN as cofactor.

It carries out the reaction a quinone + NADH + H(+) = a quinol + NAD(+). The catalysed reaction is a quinone + NADPH + H(+) = a quinol + NADP(+). Its function is as follows. It seems to function in response to environmental stress when various electron transfer chains are affected or when the environment is highly oxidizing. It reduces quinones to the hydroquinone state to prevent interaction of the semiquinone with O2 and production of superoxide. It prefers NADH over NADPH. The protein is NAD(P)H dehydrogenase (quinone) of Archaeoglobus fulgidus (strain ATCC 49558 / DSM 4304 / JCM 9628 / NBRC 100126 / VC-16).